The chain runs to 278 residues: Large ribosomal subunit protein uL2 (278 aa).

Disordered stretches follow at residues 1–20 and 225–278; these read MGIR…SVSD and VMNP…GKKR. The span at 258–278 shows a compositional bias: basic residues; sequence RNKKKASSRLIVRRRKSGKKR.

The protein belongs to the universal ribosomal protein uL2 family. As to quaternary structure, part of the 50S ribosomal subunit. Forms a bridge to the 30S subunit in the 70S ribosome.

Its function is as follows. One of the primary rRNA binding proteins. Required for association of the 30S and 50S subunits to form the 70S ribosome, for tRNA binding and peptide bond formation. It has been suggested to have peptidyltransferase activity; this is somewhat controversial. Makes several contacts with the 16S rRNA in the 70S ribosome. This chain is Large ribosomal subunit protein uL2, found in Cutibacterium acnes (strain DSM 16379 / KPA171202) (Propionibacterium acnes).